Consider the following 498-residue polypeptide: ATP synthase subunit beta, chloroplastic (498 aa).

172–179 (GGAGVGKT) is an ATP binding site.

This sequence belongs to the ATPase alpha/beta chains family. F-type ATPases have 2 components, CF(1) - the catalytic core - and CF(0) - the membrane proton channel. CF(1) has five subunits: alpha(3), beta(3), gamma(1), delta(1), epsilon(1). CF(0) has four main subunits: a(1), b(1), b'(1) and c(9-12).

It is found in the plastid. It localises to the chloroplast thylakoid membrane. It catalyses the reaction ATP + H2O + 4 H(+)(in) = ADP + phosphate + 5 H(+)(out). Produces ATP from ADP in the presence of a proton gradient across the membrane. The catalytic sites are hosted primarily by the beta subunits. In Carica papaya (Papaya), this protein is ATP synthase subunit beta, chloroplastic.